Reading from the N-terminus, the 133-residue chain is Glutaredoxin-C4, chloroplastic (133 aa).

Residues methionine 1–proline 13 show a composition bias toward low complexity. Residues methionine 1 to proline 25 are disordered. Residues methionine 1–methionine 27 constitute a chloroplast transit peptide. The Glutaredoxin domain occupies leucine 29–alanine 129. Cysteine 49 and cysteine 52 are disulfide-bonded.

This sequence belongs to the glutaredoxin family. CPYC subfamily.

It is found in the plastid. It localises to the chloroplast. Its function is as follows. Has a glutathione-disulfide oxidoreductase activity in the presence of NADPH and glutathione reductase. Reduces low molecular weight disulfides and proteins. This chain is Glutaredoxin-C4, chloroplastic (GRXC4), found in Oryza sativa subsp. japonica (Rice).